The chain runs to 470 residues: 3-isopropylmalate dehydratase large subunit (470 aa).

Residues Cys-349, Cys-409, and Cys-412 each contribute to the [4Fe-4S] cluster site.

The protein belongs to the aconitase/IPM isomerase family. LeuC type 1 subfamily. Heterodimer of LeuC and LeuD. The cofactor is [4Fe-4S] cluster.

The catalysed reaction is (2R,3S)-3-isopropylmalate = (2S)-2-isopropylmalate. Its pathway is amino-acid biosynthesis; L-leucine biosynthesis; L-leucine from 3-methyl-2-oxobutanoate: step 2/4. Catalyzes the isomerization between 2-isopropylmalate and 3-isopropylmalate, via the formation of 2-isopropylmaleate. This is 3-isopropylmalate dehydratase large subunit from Afipia carboxidovorans (strain ATCC 49405 / DSM 1227 / KCTC 32145 / OM5) (Oligotropha carboxidovorans).